The following is a 343-amino-acid chain: 4-hydroxy-2-oxovalerate aldolase (343 aa).

The region spanning 4 to 254 (PRLTDTTLRD…NPGLDVFGLM (251 aa)) is the Pyruvate carboxyltransferase domain. 12–13 (RD) is a substrate binding site. D13 contributes to the Mn(2+) binding site. H16 (proton acceptor) is an active-site residue. Substrate is bound by residues S166 and H193. Residues H193 and H195 each contribute to the Mn(2+) site. A substrate-binding site is contributed by Y284.

The protein belongs to the 4-hydroxy-2-oxovalerate aldolase family.

It carries out the reaction (S)-4-hydroxy-2-oxopentanoate = acetaldehyde + pyruvate. This chain is 4-hydroxy-2-oxovalerate aldolase, found in Chloroflexus aggregans (strain MD-66 / DSM 9485).